The following is a 200-amino-acid chain: Glutathione S-transferase 1-1 (200 aa).

A GST N-terminal domain is found at 1-73 (GSSPCRSVIM…YLVEKYGKTD (73 aa)). Glutathione is bound by residues Ser2, 43 to 45 (HTI), and 57 to 59 (ESR). The 122-residue stretch at 79–200 (CPKKRAVINQ…AGCLEFKKYF (122 aa)) folds into the GST C-terminal domain.

It belongs to the GST superfamily. Theta family. Homodimer.

It carries out the reaction RX + glutathione = an S-substituted glutathione + a halide anion + H(+). It catalyses the reaction 1,1,1-trichloro-2,2-bis(4-chlorophenyl)ethane = 1,1-dichloro-2,2-bis(4-chlorophenyl)ethylene + chloride + H(+). Conjugation of reduced glutathione to a wide number of exogenous and endogenous hydrophobic electrophiles. Has DDT dehydrochlorinase activity. In Drosophila teissieri (Fruit fly), this protein is Glutathione S-transferase 1-1 (GstD1).